The sequence spans 487 residues: N-succinylglutamate 5-semialdehyde dehydrogenase (487 aa).

221–226 (GSSRTG) serves as a coordination point for NAD(+). Residues Glu-244 and Cys-278 contribute to the active site.

This sequence belongs to the aldehyde dehydrogenase family. AstD subfamily.

The catalysed reaction is N-succinyl-L-glutamate 5-semialdehyde + NAD(+) + H2O = N-succinyl-L-glutamate + NADH + 2 H(+). Its pathway is amino-acid degradation; L-arginine degradation via AST pathway; L-glutamate and succinate from L-arginine: step 4/5. Its function is as follows. Catalyzes the NAD-dependent reduction of succinylglutamate semialdehyde into succinylglutamate. The protein is N-succinylglutamate 5-semialdehyde dehydrogenase of Pseudomonas putida (strain ATCC 700007 / DSM 6899 / JCM 31910 / BCRC 17059 / LMG 24140 / F1).